A 230-amino-acid polypeptide reads, in one-letter code: MCGNNMSTPLPAIVPAARKATAAVIFLHGLGDTGHGWAEAFAGIRSSHIKYICPHAPVRPVTLNMNMAMPSWFDIIGLSPDSQEDESGIKQAAENIKALIDQEVKNGIPSNRIILGGFSQGGALSLYTALTTQQKLAGVTALSCWLPLRASFPQGPIGGANRDISILQCHGDCDPLVPLMFGSLTVEKLKTLVNPANVTFKTYEGMMHSSCQQEMMDVKQFIDKLLPPID.

Active-site charge relay system residues include Ser119, Asp174, and His208. At Lys224 the chain carries N6-acetyllysine.

The protein belongs to the AB hydrolase superfamily. AB hydrolase 2 family. As to quaternary structure, homodimer.

The protein localises to the cytoplasm. It is found in the cell membrane. Its subcellular location is the nucleus membrane. The protein resides in the endoplasmic reticulum. It carries out the reaction S-hexadecanoyl-L-cysteinyl-[protein] + H2O = L-cysteinyl-[protein] + hexadecanoate + H(+). The enzyme catalyses 1-hexadecanoyl-sn-glycero-3-phosphocholine + H2O = sn-glycerol 3-phosphocholine + hexadecanoate + H(+). The catalysed reaction is a 1-(9Z-octadecenoyl)-2-acyl-sn-glycero-3-phosphocholine + H2O = a 2-acyl-sn-glycero-3-phosphocholine + (9Z)-octadecenoate + H(+). In terms of biological role, acts as an acyl-protein thioesterase. Hydrolyzes fatty acids from S-acylated cysteine residues in proteins such as trimeric G alpha proteins or HRAS. Acts as a palmitoyl thioesterase that catalyzes depalmitoylation of proteins, such as ADRB2, KCNMA1 and SQSTM1. Acts as a negative regulator of autophagy by mediating palmitoylation of SQSTM1, decreasing affinity between SQSTM1 and ATG8 proteins and recruitment of ubiquitinated cargo proteins to autophagosomes. Acts as a lysophospholipase and hydrolyzes lysophosphatidylcholine (lyso-PC). Also hydrolyzes lysophosphatidylethanolamine (lyso-PE), lysophosphatidylinositol (lyso-PI) and lysophosphatidylserine (lyso-PS). Has much higher thioesterase activity than lysophospholipase activity. Contributes to the production of lysophosphatidic acid (LPA) during blood coagulation by recognizing and cleaving plasma phospholipids to generate lysophospholipids which in turn act as substrates for ENPP2 to produce LPA. This Pongo abelii (Sumatran orangutan) protein is Acyl-protein thioesterase 1 (LYPLA1).